Here is a 309-residue protein sequence, read N- to C-terminus: Protein FdhE (309 aa).

It belongs to the FdhE family.

It localises to the cytoplasm. Necessary for formate dehydrogenase activity. This chain is Protein FdhE, found in Escherichia coli O127:H6 (strain E2348/69 / EPEC).